A 2363-amino-acid chain; its full sequence is MSTETQPEMASTPPEPIAIIGMSCRLSGEASSVDGFWDMLRNGRTGHGRVPSSRYEASAWYHPNQDRKGGINHDSGFFLEEDPSRFDAPFFSITAKEAAGMDPTQRLLLEVAYETFENSGVPMESLPGSRTGVFTGCMTNDYELLSTGDLYNMPHNAATGNARAMLANRLSWFFDLRGPSIMLDTACSSSLTALHLASKSLRDGECEMALVSGASLILHPNFTQRLSSMHMLSPDGISHSFDASANGYGRGEGFAAVLLKPLRTALADNDAIRAIIRATGINQDGRTPGITMPSRQAQAGLIRALYGPGLPSLQETAFFEAHGTGTKVGDPTELSAIGECLMGAETSTNDRLYVGSVKGNIGHTEGAAGVASLIKVVLCLENDMLVPNAGFSKLNSNIHLDKWLLRLSDKTIRWPSHLPRRASINSFGFGGSNAHAIVESASTYLERPAALLSGLDKGEPQIVVFSTHDKTGIDRVAAKWGPFLQAQIDAEQNISFRDIAYTMYARRSQLSFRSFAVAGSLGQLRDALQQGLPHFLRANGTAHANLAFVFTGQGAQWAQMGVELLQVTSFRESITRSEQILSSLGCPWNLFEEIQVEAATSRMNQPDRSQSICCALQIALVNLLASWGVHPKATVGHSSGEIGAAYAAGFITQEDAIRIAYFRGLCSLQVACHGRAGAMLAANLSLPDAQTYLQGVPPRSVVVACVNGPKSVTLSGDADRIDQLEKQLQADGLFARKLRVETAYHSPHMNMVAEGYRHDLQDIQPAKCGESSIAMFSSVTKERVYATDMTADYWVRNLVSPVEFLSAVTSLANMTEASQYRHRAVAVKWSAFLEIGPHEALKGPFLQVLKSINAGLSTVPYHALVRRHADALQTTLNVAGLLWCIGIPIDIEAVNSSINTAVPQLMHNLPSYPWNHQGSFWHEPVASARLRKRREPHHDLLGSPMDFQNDTEPRWRNFLRVSDIPWLADHVVADSILFPAAGMIVMVAEAGRILANTSLRLEGIEFNDLAFLQGLVIPDDDRGVETVLHVAPYHELAEWYEFTLFSLPEDGPWVRHATGTFTLHYDARGVPLNVEEWGLSVERFRKIQTAECETNRDAVYEWLSQTGGVTMGPAFQSVSRAAFCTEENRLWIEGEVTDTRTMMPSEYASPCFIHPTSLDTLFQAAVLSCSDALGNQNAKIPVGVDRLYLSTTWDLQQGDYFSVHTETCLNDGDSRLDSIASDVSWSQPRVVLKGVRLGPVPMSKVPSTSTTAGVDSGTSRFSSIVWAQHLESPTSPALAGHDRDGQLTDWVRDICYTYGNACALVVTQPSWKSPAMTSIQTVRPQLGSRPCLQGLTIVIVGLDKAADEFATAVTRLMPGAQVKQIAALQDFSPSTFNESFFDVVLVDQPCIGNAADADVLLTSLSSTTKQDGVLAVRTYDSQLDPMDYIQRSSEWKVSGRIRDGDFLLAHRQRIPAPLDSTIFVLMPDTEQIPPTFRVALERALSAVGVKLCPVDVEDINGLAGKMVISLLEFRHPWTSKWTSVAMAQFKMLLEARYILWVSPIPILSKDASAASFGASTGLLRTLRNEQPGVTLPQVQYDPDDPNSETSLAQGILQVIQLTLVPVPHRNHDMEYRLQHGRLLVPRVVSEAVVDDKMQTLLHGPRPILARLADDPRALRFHAGSPDGHGGQWVEDRQLVSDVPDDHVEVQLSLRSVVARGSRNFNAHESRLSVVEAVGVIRKLGFAGSTDLSVGDIVVLLVPGAGTVDGMSNRIQVSSKAVAKLPAQLTLAQAVTVPLAYILAYTSLFDIARLGPNCRVLLVGPVGPILRALLSCALEIRGMQVYVATEERAVVEELVAQYAIAPEYVLSIHGGLDGRIADLTEGKGVTAVLSCLGGSSGRLAARCLGSGGHYVDLTGEMNLAALPKAVVSQGCTFTSVNLNSMLQNQSEKVYSSFRRAVATIGLHHQIQPTSIFPISKWAEAESLARQTGISVAIDFTDPGQVPVVPALQEPVNLPPQQTYLLAGGLGMIGLGFAKTLVDSGARHLVILSRSGVLQPSQRIAVASLADQGCHVEIIRCDISQEADLQQVLSQVRSQNWQLKGIIQCATVLKDAAFHTMTFEDWASSTNPKILGTLNLHKVFVDVDLDFFITLSSVSGLIGNIGQANYAAGNVFMDELMIWRRAHGLPGHSIDIGLVPDASGMSDMAETAEVRRSRYSHLEGTEITLRELQMLLRVIILGDIPVPVQIIAGITDDLPREGASSWQYDRKLDHRVRLGHSEPDNMPAQISELLKSSPTIEDASYVVNQALREYLASAMATTADTIDSDLPLSSLGVDSLKVTEVQNWVSRKMGAQLSSFDFLGMQPLRVLSEKIAAQSAFVTVS.

Residues 14-440 (PEPIAIIGMS…GSNAHAIVES (427 aa)) enclose the Ketosynthase family 3 (KS3) domain. Active-site for beta-ketoacyl synthase activity residues include Cys187, His322, and His363. Positions 546 to 854 (LAFVFTGQGA…FLQVLKSINA (309 aa)) are malonyl-CoA:ACP transacylase (MAT) domain. The active-site For malonyltransferase activity is Ser638. Residues 938-1068 (HDLLGSPMDF…GTFTLHYDAR (131 aa)) are N-terminal hotdog fold. Positions 938–1224 (HDLLGSPMDF…RLDSIASDVS (287 aa)) are dehydratase (DH) domain. The 309-residue stretch at 938–1246 (HDLLGSPMDF…LGPVPMSKVP (309 aa)) folds into the PKS/mFAS DH domain. Catalysis depends on His970, which acts as the Proton acceptor; for dehydratase activity. Residues 1089–1246 (TAECETNRDA…LGPVPMSKVP (158 aa)) are C-terminal hotdog fold. Asp1159 serves as the catalytic Proton donor; for dehydratase activity. Residues 1669–1976 (GGQWVEDRQL…ARQTGISVAI (308 aa)) form an enoylreductase (ER) domain region. The tract at residues 2001 to 2177 (TYLLAGGLGM…PGHSIDIGLV (177 aa)) is catalytic ketoreductase (KRc) domain. In terms of domain architecture, Carrier spans 2279 to 2357 (EDASYVVNQA…VLSEKIAAQS (79 aa)). Ser2317 is subject to O-(pantetheine 4'-phosphoryl)serine.

It functions in the pathway alkaloid biosynthesis. Functionally, highly reducing polyketide synthase; part of the gene cluster that mediates the biosynthesis of communesins, a prominent class of indole alkaloids with great potential as pharmaceuticals. Communesins are biosynthesized by the coupling of tryptamine and aurantioclavine, two building blocks derived from L-tryptophan. The L-tryptophan decarboxylase cnsB converts L-tryptophan to tryptamine, whereas the tryptophan dimethylallyltransferase cnsF converts L-tryptophan to 4-dimethylallyl tryptophan which is further transformed to aurantioclavine by the aurantioclavine synthase cnsA, probably aided by the catalase cnsD. The cytochrome P450 monooxygenase cnsC catalyzes the heterodimeric coupling between the two different indole moieties, tryptamine and aurantioclavine, to construct vicinal quaternary stereocenters and yield the heptacyclic communesin scaffold. The O-methyltransferase cnsE then methylates the communesin scaffold to produce communesin K, the simplest characterized communesin that contains the heptacyclic core. The dioxygenase cnsJ converts communesin K into communesin I. Acylation to introduce the hexadienyl group at position N16 of communesin I by the acyltransferase cnsK leads to the production of communesin B. The hexadienyl group is produced by the highly reducing polyketide synthase cnsI, before being hydrolytically removed from cnsI by the serine hydrolase cnsH, converted into hexadienyl-CoA by the CoA ligase cnsG, and then transferred to communesin I by cnsK. Surprisingly, cnsK may also be a promiscuous acyltransferase that can tolerate a range of acyl groups, including acetyl-, propionyl-, and butyryl-CoA, which lead to communesins A, G and H respectively. The roles of the alpha-ketoglutarate-dependent dioxygenases cnsM and cnsP have still to be determined. This chain is Highly reducing polyketide synthase cnsI, found in Penicillium expansum (Blue mold rot fungus).